Reading from the N-terminus, the 89-residue chain is MALTTEEKKQVLSEYGLHETDTGSPEAQVAMLTKRIVDLTEHLKMHKHDHHSRRGLLLLVGRRRRLLKYVQKVDIARYRSLIERLGLRR.

Over residues 1 to 21 (MALTTEEKKQVLSEYGLHETD) the composition is skewed to basic and acidic residues. The interval 1-24 (MALTTEEKKQVLSEYGLHETDTGS) is disordered.

This sequence belongs to the universal ribosomal protein uS15 family. In terms of assembly, part of the 30S ribosomal subunit. Forms a bridge to the 50S subunit in the 70S ribosome, contacting the 23S rRNA.

Its function is as follows. One of the primary rRNA binding proteins, it binds directly to 16S rRNA where it helps nucleate assembly of the platform of the 30S subunit by binding and bridging several RNA helices of the 16S rRNA. Functionally, forms an intersubunit bridge (bridge B4) with the 23S rRNA of the 50S subunit in the ribosome. The chain is Small ribosomal subunit protein uS15 from Rhodococcus opacus (strain B4).